The sequence spans 471 residues: Tripartite motif-containing protein 60 (471 aa).

The RING-type zinc finger occupies 16 to 57 (CPICLEYLKDPVTINCGHNFCRSCLSVSWKDLDDTFPCPVCR). A B box-type zinc finger spans residues 92–133 (KENAMCEKHNQFLTLFCVKDLEILCTQCSFSTKHQKHYICPI). Residues cysteine 97, histidine 100, cysteine 119, and histidine 125 each contribute to the Zn(2+) site. Residues 171–223 (ELKKKVEYKREEINSEFEQIRLFLQNEQEMILRQIQDEEMNILAKLNENLVEL) are a coiled coil. A B30.2/SPRY domain is found at 277 to 470 (FSLPPQYSGL…LKICSVSDSE (194 aa)).

The protein belongs to the TRIM/RBCC family.

Functionally, E3 SUMO-protein ligase that mediates SUMOylation of TAB2 leading to inhibition of NF-kappa-B and MAPK pathways by suppressing the TRAF6/TAB2/TAK1 complex. The protein is Tripartite motif-containing protein 60 (TRIM60) of Homo sapiens (Human).